We begin with the raw amino-acid sequence, 383 residues long: WAT1-related protein At3g18200 (383 aa).

A compositionally biased stretch (basic residues) spans 1-16 (MCYQTSKKKRRSRKRR). The interval 1–23 (MCYQTSKKKRRSRKRRAQEEKEK) is disordered. Helical transmembrane passes span 33-53 (VKLV…HIVS), 65-85 (VYPV…AYFF), 91-111 (PPLT…GITA), 126-146 (TFAS…ACAL), 158-178 (GVAK…ITLY), 204-224 (LTLG…WMVL), 237-257 (TLTS…ALFV), 272-292 (LFTI…LQTW), 300-320 (VFVA…AFLI), and 325-345 (LYSG…LVLW). EamA domains lie at 44 to 173 (FCFA…GGAT) and 216 to 344 (LSWA…YLVL).

It belongs to the drug/metabolite transporter (DMT) superfamily. Plant drug/metabolite exporter (P-DME) (TC 2.A.7.4) family.

It localises to the membrane. The polypeptide is WAT1-related protein At3g18200 (Arabidopsis thaliana (Mouse-ear cress)).